We begin with the raw amino-acid sequence, 294 residues long: MLERLSGHTRLTALLAAPARHSLSPKMHNAAYAKLGLDYAYLAFEVDNSGLAAAVQGMRALGICGANVSMPNKQAIVPLLDELSPAAALAGAVNTVVNTDGKGHLVGHITDGTGAIRSLAEEGVAIKDQIITIAGAGGAGTAIAVQLGLDGAKEIRLFNRKTATFKQAKQVLKGINAKTSALASLQDLADDRAFRRSIAESSIYIDATGVGMKPLEEHSLITDPALIRPDLVVFDLVYHPAETKLLAFAREHGAKKVMNGLGMLLYQGAEAFKLMTGEDMPVAYIRELLCRNKE.

Shikimate is bound by residues 22–24 (SLS) and serine 69. The active-site Proton acceptor is the lysine 73. Shikimate-binding residues include asparagine 94 and aspartate 111. NADP(+)-binding positions include 135-139 (GAGGA) and leucine 236. Position 238 (tyrosine 238) interacts with shikimate. Glycine 260 is a binding site for NADP(+).

Belongs to the shikimate dehydrogenase family. In terms of assembly, homodimer.

It catalyses the reaction shikimate + NADP(+) = 3-dehydroshikimate + NADPH + H(+). Its pathway is metabolic intermediate biosynthesis; chorismate biosynthesis; chorismate from D-erythrose 4-phosphate and phosphoenolpyruvate: step 4/7. Its function is as follows. Involved in the biosynthesis of the chorismate, which leads to the biosynthesis of aromatic amino acids. Catalyzes the reversible NADPH linked reduction of 3-dehydroshikimate (DHSA) to yield shikimate (SA). The chain is Shikimate dehydrogenase (NADP(+)) from Streptococcus equi subsp. zooepidemicus (strain MGCS10565).